Here is a 429-residue protein sequence, read N- to C-terminus: Acetylornithine aminotransferase (429 aa).

Pyridoxal 5'-phosphate-binding positions include 126-127 and phenylalanine 160; that span reads GA. Arginine 163 is a N(2)-acetyl-L-ornithine binding site. 251–254 is a binding site for pyridoxal 5'-phosphate; that stretch reads DEVQ. Lysine 280 is modified (N6-(pyridoxal phosphate)lysine). Serine 307 is a binding site for N(2)-acetyl-L-ornithine. Threonine 308 is a binding site for pyridoxal 5'-phosphate.

This sequence belongs to the class-III pyridoxal-phosphate-dependent aminotransferase family. ArgD subfamily. In terms of assembly, homodimer. Pyridoxal 5'-phosphate serves as cofactor.

It is found in the cytoplasm. The catalysed reaction is N(2)-acetyl-L-ornithine + 2-oxoglutarate = N-acetyl-L-glutamate 5-semialdehyde + L-glutamate. It participates in amino-acid biosynthesis; L-arginine biosynthesis; N(2)-acetyl-L-ornithine from L-glutamate: step 4/4. With respect to regulation, N-acetylornithine aminotransferase activity is stimulated by the addition of Mg(2+), Ca(2+) or Mn(2+), and inhibited by the addition of Zn(2+), Cu(2+), Co(2+) or Ni(2+). Its function is as follows. Catalyzes the reversible conversion of N-acetylornithine to N-acetylglutamate-5-semialdehyde. In vitro, also shows very low ornithine aminotransferase (OAT) and gamma-aminobutyrate aminotransferase (GABA-AT) activity, catalyzing the conversion of ornithine (Orn) to glutamate-5-semialdehyde and of gamma-aminobutyric acid (GABA) to succinate semialdehyde. It has been shown to function as a GABA-AT and contributes to closing the tricarboxylic acid cycle of Synechocystis sp. PCC6803 via the GABA shunt. However, the catalytic efficiency toward N-acetylornithine is 2500-fold and 10700-fold higher than that toward ornithine and gamma-aminobutyrate, respectively, indicating that the protein mainly functions as an N-acetylornithine aminotransferase. The polypeptide is Acetylornithine aminotransferase (Synechocystis sp. (strain ATCC 27184 / PCC 6803 / Kazusa)).